Consider the following 264-residue polypeptide: Hydroxyethylthiazole kinase (264 aa).

Methionine 41 lines the substrate pocket. The ATP site is built by lysine 117 and serine 163. Glycine 190 lines the substrate pocket.

The protein belongs to the Thz kinase family. The cofactor is Mg(2+).

It carries out the reaction 5-(2-hydroxyethyl)-4-methylthiazole + ATP = 4-methyl-5-(2-phosphooxyethyl)-thiazole + ADP + H(+). It participates in cofactor biosynthesis; thiamine diphosphate biosynthesis; 4-methyl-5-(2-phosphoethyl)-thiazole from 5-(2-hydroxyethyl)-4-methylthiazole: step 1/1. In terms of biological role, catalyzes the phosphorylation of the hydroxyl group of 4-methyl-5-beta-hydroxyethylthiazole (THZ). The polypeptide is Hydroxyethylthiazole kinase (Thermoanaerobacter pseudethanolicus (strain ATCC 33223 / 39E) (Clostridium thermohydrosulfuricum)).